The sequence spans 424 residues: Serine/threonine-protein kinase H1 (424 aa).

Gly2 is lipidated: N-myristoyl glycine. Residue Cys3 is the site of S-palmitoyl cysteine attachment. The disordered stretch occupies residues 59-79; that stretch reads APPCPGVPNTGHTAPPSEPPR. Residues 98–355 form the Protein kinase domain; the sequence is YDIKALIGRG…ALQALRHPWV (258 aa). Residues 104–112 and Lys127 contribute to the ATP site; that span reads IGRGSFSRV. Asp218 serves as the catalytic Proton acceptor. The disordered stretch occupies residues 378–408; that stretch reads RASSRCQSTKSSQSTRSSRSTRSNKSRRVRE. Ser380 and Ser381 each carry phosphoserine; by autocatalysis. A compositionally biased stretch (low complexity) spans 381–398; it reads SRCQSTKSSQSTRSSRST.

The protein belongs to the protein kinase superfamily. CAMK Ser/Thr protein kinase family. In terms of assembly, homodimer. Post-translationally, autophosphorylated on serine residues. Myristoylated. Required for membrane association. Prerequisite for palmitoylation to occur. In terms of processing, palmitoylated.

Its subcellular location is the golgi apparatus. It localises to the cytoplasm. It is found in the cytoskeleton. The protein localises to the microtubule organizing center. The protein resides in the centrosome. Its subcellular location is the nucleus speckle. It localises to the endoplasmic reticulum membrane. It is found in the cell membrane. The enzyme catalyses L-seryl-[protein] + ATP = O-phospho-L-seryl-[protein] + ADP + H(+). It catalyses the reaction L-threonyl-[protein] + ATP = O-phospho-L-threonyl-[protein] + ADP + H(+). With respect to regulation, activity depends on Ca(2+) concentration. Functionally, serine/threonine protein kinase that may be involved in the regulation of pre-mRNA processing. It may phosphorylate components of nuclear splice factor compartments (SFC), such as non-snRNP splicing factors containing a serine/arginine-rich domain (SR proteins). Reversible phosphorylation of SR proteins may cause their release into the nucleoplasm and change their local concentration, thereby influencing alternative splicing. In Mus musculus (Mouse), this protein is Serine/threonine-protein kinase H1 (Pskh1).